The primary structure comprises 831 residues: MTISDSRRTFLKASAAAATASAAGIPLANGTAAEAQAISTGIRWDKAACRFCGTGCSVLVGTKEGRVVATQGDPDAPVNRGLNCIKGYFLSKIMYGEDRLTMPLLRKTNGVYDKNGTFEPVSWDEAFDVMAQKWKEALAKKGPTSVGMFGSGQWTVWEGYAAAKLMKAGFRSNNIDPNARHCMASAVVGFMRTFGIDEPMGCYDDFEHADTFVLWGSNMAEMHPILWSRLTDTRLTKPGSEVHVLSTYEHRSFELADNGMVFAPQTDLAILNYIANYIISTGRVNEDFMSKHVNITKTATDIGYGLRDEHALQQEAENPNSGKLEPISFDEYAASVAEYTVDKVSELSGVPAAQLEKLAEQYADPNRKVMSLWTMGFNQHTRGSWVNSLMYNVHLLVGKISEPGNSPFSLTGQPSACGTAREVGTFAHRLPADMVVMNDAHRALTEKKWNLPEGTIPAKPGFHAVLQHRKLKDGDLNAYWVQCNNNMQAAPNMNEEGYPGYRNPENFITVSDPYPTVTTMSADLILPTAMWVEKEGAYGNAERRTQFWRQQVKAPGEAKSDLWQLMEFSKRFTIEEVWGEELLAKMPEHRGKTMYDVLFANGKVDKYPLSETAEGFDNDESEHFGYYVQKGLFEEYAGFGRGKAHDLASFETYHQSRGLRWPVVDGQETLYRFREGYDPYVPEGEGVRFYGHSDGKAKIIYAPYEPAPEVPDAEFDLWLCTGRVLEHWHSGSMTRRVPELHRAYPAAVVYMHPEDAKARGLRRGQEINISTRRGDMLSRVETRGRNKVPQGLVFVPWFDEGQLINQLTLDATCPLSKETDFKKCACKVERA.

Positions 1–35 form a signal peptide, tat-type signal; it reads MTISDSRRTFLKASAAAATASAAGIPLANGTAAEA. The region spanning 42–98 is the 4Fe-4S Mo/W bis-MGD-type domain; the sequence is IRWDKAACRFCGTGCSVLVGTKEGRVVATQGDPDAPVNRGLNCIKGYFLSKIMYGED. 4 residues coordinate [4Fe-4S] cluster: C49, C52, C56, and C84. Mo-bis(molybdopterin guanine dinucleotide) contacts are provided by residues K86, Q153, N178, C182, 215–222, 246–250, 265–267, M375, Q379, N485, 511–512, K534, D561, and 721–730; these read WGSNMAEM, STYEH, QTD, SD, and TGRVLEHWHS. Substrate is bound at residue W797. 2 residues coordinate Mo-bis(molybdopterin guanine dinucleotide): N805 and K822.

This sequence belongs to the prokaryotic molybdopterin-containing oxidoreductase family. NasA/NapA/NarB subfamily. In terms of assembly, component of the periplasmic nitrate reductase NapAB complex composed of NapA and NapB. The cofactor is [4Fe-4S] cluster. It depends on Mo-bis(molybdopterin guanine dinucleotide) as a cofactor. Post-translationally, predicted to be exported by the Tat system. The position of the signal peptide cleavage has not been experimentally proven.

The protein localises to the periplasm. The enzyme catalyses 2 Fe(II)-[cytochrome] + nitrate + 2 H(+) = 2 Fe(III)-[cytochrome] + nitrite + H2O. Its function is as follows. Catalytic subunit of the periplasmic nitrate reductase complex NapAB. Receives electrons from NapB and catalyzes the reduction of nitrate to nitrite. The chain is Periplasmic nitrate reductase from Dinoroseobacter shibae (strain DSM 16493 / NCIMB 14021 / DFL 12).